The following is a 352-amino-acid chain: Minor capsid protein VP2 (352 aa).

Gly2 is lipidated: N-myristoyl glycine; by host. The D1 stretch occupies residues 273-308 (SGEFIEKFEAPGGANQRTAPQWMLPLLLGLYGSVTS). A helical transmembrane segment spans residues 290–310 (TAPQWMLPLLLGLYGSVTSAL). The tract at residues 313 to 352 (YEDGPNKKKRKLSRGSSQKTKGTSASAKARHKRRNRSSRS) is disordered. Residues 313 to 352 (YEDGPNKKKRKLSRGSSQKTKGTSASAKARHKRRNRSSRS) are DNA-binding. Residues 316-324 (GPNKKKRKL) carry the Nuclear localization signal motif. Positions 326–338 (RGSSQKTKGTSAS) are enriched in polar residues. The segment covering 340-352 (KARHKRRNRSSRS) has biased composition (basic residues).

This sequence belongs to the polyomaviruses capsid protein VP2 family. In terms of assembly, forms homooligomers, and heterooligomers with VP3 in the endoplasmic reticulum membrane. Interacts (via D1 domain) with VP1. Interacts (via D1 domain) with VP1. Interacts (via C-terminus) with host SP1, this is probably also the case for VP2; this interaction represses SP1 activation of the SV40 early promoter and participates in virion assembly. Interacts (via nuclear localization signal) with host importin alpha2-beta heterodimer. As to quaternary structure, oligomerizes with VP3 in the nucleus.

Its subcellular location is the virion. It is found in the host nucleus. The protein localises to the host endoplasmic reticulum. The protein resides in the host endoplasmic reticulum membrane. Functionally, structural protein that resides within the core of the capsid surrounded by 72 VP1 pentamers. Following virus endocytosis and trafficking to the endoplasmic reticulum, VP2 and VP3 form oligomers and integrate into the endoplasmic reticulum membrane. Heterooligomer VP2-VP3 may create a viroporin for transporting the viral genome across the endoplasmic reticulum membrane to the cytoplasm. Nuclear entry of the viral DNA involves the selective exposure and importin recognition of VP2 or VP3 nuclear localization signal (shared C-terminus). Plays a role in virion assembly within the nucleus in particular through a DNA-binding domain located in the C-terminal region. An N-terminal myristoylation suggests a scaffold function for virion assembly. The viral progenies exit the cells by lytic release. Isoform VP2 may repress SP1 activation of the SV40 early promoter, via specific protein-protein and protein-DNA interactions. Its function is as follows. Structural protein that resides within the core of the capsid surrounded by 72 VP1 pentamers. Following virus entry, VP2 and VP3 form oligomers and integrate into the endoplasmic reticulum membrane. Heterooligomer VP2-VP3 may create a viroporin for transporting the viral genome across the endoplasmic reticulum membrane. Essential for focus formation and virus endoplasmic reticulum-to-cytosol membrane transport, required to recruit selective cellular components to the foci in the ER membrane. Nuclear entry of the viral DNA involves the selective exposure and importin recognition of VP2 or VP3 nuclear localization signal (shared C-terminus). Isoform VP3 represses SP1 activation of the SV40 early promoter, via specific protein-protein and protein-DNA interactions. SP1 additionally participates in recruiting VP3 to the SV40 minichromosome during SV40 assembly. Plays a role in virion assembly within the nucleus. May initiate host cell lysis when associated with VP4. In terms of biological role, viroporin inducing perforation of cellular membranes to trigger virus progeny release. Forms pores of 3 nm inner diameter. VP4 is expressed about 24 hours after the late structural proteins and is not incorporated into the mature virion. This Simian virus 40 (SV40) protein is Minor capsid protein VP2.